A 280-amino-acid chain; its full sequence is MRLAFQLSYDGNQFRGSQLQPAYRTVEGELITACQRVQLFDDPCKAGFALAGRTDRGVHARGQVGAFSTPFPERAVEALNGQLSPDLWCNGFAEVPPSFHPRFDAISRTYRYFFADWPLDIRAMDQAAAALIGTHDFSRLARVREKSPIRTVKSARVFQDRGIPVFEVTAHTYLWHMVRCMAAALLLIGTHEREPELMERLLSGKCRRNPPAAPADGLVLWDVDCGVTFTPTEPDPRSRDWIGSARREAMVRERIIGLLDRSGVDRRGKEPGDDSGRDLL.

The active-site Nucleophile is Asp-55. Substrate is bound at residue Tyr-110.

This sequence belongs to the tRNA pseudouridine synthase TruA family.

The enzyme catalyses uridine(38/39/40) in tRNA = pseudouridine(38/39/40) in tRNA. Its function is as follows. Formation of pseudouridine at positions 38, 39 and 40 in the anticodon stem and loop of transfer RNAs. This Methanosphaerula palustris (strain ATCC BAA-1556 / DSM 19958 / E1-9c) protein is tRNA pseudouridine synthase A.